A 179-amino-acid polypeptide reads, in one-letter code: Caveolin-1 (179 aa).

Ser2 is subject to N-acetylserine. Ser2 carries the post-translational modification Phosphoserine. Positions Ser2 to Val95 are required for homooligomerization. The Cytoplasmic portion of the chain corresponds to Ser2–Ser105. Position 5 is an N6-acetyllysine; alternate (Lys5). Lys5 participates in a covalent cross-link: Glycyl lysine isopeptide (Lys-Gly) (interchain with G-Cter in ubiquitin); alternate. Position 6 is a phosphotyrosine (Tyr6). A Phosphoserine modification is found at Ser9. Phosphotyrosine; by ABL1 is present on Tyr14. The residue at position 25 (Tyr25) is a Phosphotyrosine. Residues Lys26 and Lys30 each participate in a glycyl lysine isopeptide (Lys-Gly) (interchain with G-Cter in ubiquitin) cross-link. Ser37 carries the post-translational modification Phosphoserine. Glycyl lysine isopeptide (Lys-Gly) (interchain with G-Cter in ubiquitin) cross-links involve residues Lys39, Lys48, and Lys58. Residues Asp83–Val95 form an interaction with CAVIN3 region. An intramembrane region (helical) is located at residues Ala106–Leu126. The Cytoplasmic portion of the chain corresponds to His127–Ile179. The tract at residues Val132–Gln143 is interacts with SPRY1, SPRY2, SPRY3 and SPRY4. S-palmitoyl cysteine attachment occurs at residues Cys134, Cys144, and Cys157. The interacts with SPRY1, SPRY2, and SPRY4 stretch occupies residues Ser150 to Phe161. An interacts with SPRY1, SPRY2, SPRY3 and SPRY4 region spans residues Phe168 to Ile179.

Belongs to the caveolin family. As to quaternary structure, homooligomer. Interacts with GLIPR2. Interacts with NOSTRIN. Interacts with SNAP25 and STX1A. Interacts (via the N-terminus) with DPP4; the interaction is direct. Interacts with CTNNB1, CDH1 and JUP. Interacts with PACSIN2; this interaction induces membrane tubulation. Interacts with SLC7A9. Interacts with BMX and BTK. Interacts with TGFBR1. Interacts with CAVIN3 (via leucine-zipper domain) in a cholesterol-sensitive manner. Interacts with CAVIN1. Interacts with EHD2 in a cholesterol-dependent manner. Forms a ternary complex with UBXN6 and VCP; mediates CAV1 targeting to lysosomes for degradation. Interacts with ABCG1; this interaction regulates ABCG1-mediated cholesterol efflux. Interacts with NEU3; this interaction enhances NEU3 sialidase activity within caveola. Interacts (via C-terminus) with SPRY1, SPRY2 (via C-terminus), SPRY3, and SPRY4. Interacts with IGFBP5; this interaction allows trafficking of IGFBP5 from the plasma membrane to the nucleus. In terms of processing, phosphorylated at Tyr-14 by ABL1 in response to oxidative stress. Ubiquitinated. Undergo monoubiquitination and multi- and/or polyubiquitination. Monoubiquitination of N-terminal lysines promotes integration in a ternary complex with UBXN6 and VCP which promotes oligomeric CAV1 targeting to lysosomes for degradation. Ubiquitinated by ZNRF1; leading to degradation and modulation of the TLR4-mediated immune response.

The protein resides in the golgi apparatus membrane. The protein localises to the cell membrane. It is found in the membrane. It localises to the caveola. Its subcellular location is the membrane raft. In terms of biological role, may act as a scaffolding protein within caveolar membranes. Forms a stable heterooligomeric complex with CAV2 that targets to lipid rafts and drives caveolae formation. Mediates the recruitment of CAVIN proteins (CAVIN1/2/3/4) to the caveolae. Interacts directly with G-protein alpha subunits and can functionally regulate their activity. Involved in the costimulatory signal essential for T-cell receptor (TCR)-mediated T-cell activation. Its binding to DPP4 induces T-cell proliferation and NF-kappa-B activation in a T-cell receptor/CD3-dependent manner. Recruits CTNNB1 to caveolar membranes and may regulate CTNNB1-mediated signaling through the Wnt pathway. Negatively regulates TGFB1-mediated activation of SMAD2/3 by mediating the internalization of TGFBR1 from membrane rafts leading to its subsequent degradation. Binds 20(S)-hydroxycholesterol (20(S)-OHC). The polypeptide is Caveolin-1 (CAV1) (Eulemur macaco macaco (Black lemur)).